Reading from the N-terminus, the 690-residue chain is Potassium-transporting ATPase ATP-binding subunit (690 aa).

The interval 1 to 23 is disordered; the sequence is MNSTSTVRQPGGPRQQRRHTPKA. 4 consecutive transmembrane segments (helical) span residues 44–64, 78–98, 233–253, and 268–288; these read IMVKNPVMFMVWVGTLITGML, AMFNGLVTVILLFTVLFANFA, IALTVLLAVLTLVFLIVVATL, and LLIALLVALIPTTIGGLLSAI. The 4-aspartylphosphate intermediate role is filled by D321. ATP-binding positions include D358, E362, 389–396, and K408; that span reads FSARTRMS. Residues D531 and D535 each contribute to the Mg(2+) site. 3 consecutive transmembrane segments (helical) span residues 601 to 621, 627 to 647, and 665 to 685; these read FAIIPAMFAGIGIGALNIMDL, AVLSALIYNALIIPALIPLAL, and ILVYGLGGIIVPFVAIKLIDL.

The protein belongs to the cation transport ATPase (P-type) (TC 3.A.3) family. Type IA subfamily. The system is composed of three essential subunits: KdpA, KdpB and KdpC.

It localises to the cell inner membrane. It carries out the reaction K(+)(out) + ATP + H2O = K(+)(in) + ADP + phosphate + H(+). Its function is as follows. Part of the high-affinity ATP-driven potassium transport (or Kdp) system, which catalyzes the hydrolysis of ATP coupled with the electrogenic transport of potassium into the cytoplasm. This subunit is responsible for energy coupling to the transport system and for the release of the potassium ions to the cytoplasm. This Synechocystis sp. (strain ATCC 27184 / PCC 6803 / Kazusa) protein is Potassium-transporting ATPase ATP-binding subunit.